Consider the following 157-residue polypeptide: Large ribosomal subunit protein mL59 (157 aa).

The protein belongs to the mitochondrion-specific ribosomal protein mL59 family. As to quaternary structure, component of the mitochondrial large ribosomal subunit (mt-LSU). Mature yeast 74S mitochondrial ribosomes consist of a small (37S) and a large (54S) subunit. The 37S small subunit contains a 15S ribosomal RNA (15S mt-rRNA) and 34 different proteins. The 54S large subunit contains a 21S rRNA (21S mt-rRNA) and 46 different proteins.

It localises to the mitochondrion. In terms of biological role, component of the mitochondrial ribosome (mitoribosome), a dedicated translation machinery responsible for the synthesis of mitochondrial genome-encoded proteins, including at least some of the essential transmembrane subunits of the mitochondrial respiratory chain. The mitoribosomes are attached to the mitochondrial inner membrane and translation products are cotranslationally integrated into the membrane. This Saccharomyces cerevisiae (strain ATCC 204508 / S288c) (Baker's yeast) protein is Large ribosomal subunit protein mL59 (MRPL25).